The primary structure comprises 130 residues: Large ribosomal subunit protein bL19 (130 aa).

It belongs to the bacterial ribosomal protein bL19 family.

Its function is as follows. This protein is located at the 30S-50S ribosomal subunit interface and may play a role in the structure and function of the aminoacyl-tRNA binding site. In Gluconobacter oxydans (strain 621H) (Gluconobacter suboxydans), this protein is Large ribosomal subunit protein bL19.